Here is a 473-residue protein sequence, read N- to C-terminus: Cyprosin (473 aa).

The propeptide at 1-33 is activation peptide; the sequence is LKKRKVNILNHPGEHAGSNDANARRKYGVRGNF. Positions 51–470 constitute a Peptidase A1 domain; that stretch reads YFGEIGIGTP…DYGNLRVGFA (420 aa). The active site involves aspartate 69. Cystine bridges form between cysteine 82–cysteine 88 and cysteine 247–cysteine 251. Aspartate 256 is a catalytic residue. The 104-residue stretch at 281–384 folds into the Saposin B-type domain; the sequence is VMSQQCKSLV…DKLCERLPSP (104 aa). 4 disulfides stabilise this stretch: cysteine 286–cysteine 378, cysteine 311–cysteine 350, cysteine 317–cysteine 347, and cysteine 392–cysteine 429. The N-linked (GlcNAc...) asparagine glycan is linked to asparagine 364.

This sequence belongs to the peptidase A1 family. In terms of tissue distribution, mostly present in the violet parts of styles and corollas of mature flowers.

The polypeptide is Cyprosin (CYPRO1) (Cynara cardunculus (Cardoon)).